Reading from the N-terminus, the 446-residue chain is AP-2 complex subunit mu (446 aa).

Phosphoserine occurs at positions 145, 151, and 152. T157 is modified (phosphothreonine). The MHD domain maps to 177 to 445 (KNSIYIDIVE…STRAGTCEIR (269 aa)).

The protein belongs to the adaptor complexes medium subunit family. Adaptor protein complex 2 (AP-2) is a heterotetramer composed of two large adaptins (alpha-type subunit apl3 and beta-type subunit apl1), a medium chain (mu-type subunit apm4) and a small adaptin (sigma-type subunit aps2).

The protein localises to the cell membrane. It is found in the membrane. Its subcellular location is the coated pit. Component of the adaptor complexes which link clathrin to receptors in coated vesicles. Clathrin-associated protein complexes are believed to interact with the cytoplasmic tails of membrane proteins, leading to their selection and concentration. AP50 is a subunit of the plasma membrane adaptor (Potential). The polypeptide is AP-2 complex subunit mu (apm4) (Schizosaccharomyces pombe (strain 972 / ATCC 24843) (Fission yeast)).